Consider the following 298-residue polypeptide: Calcium-binding protein 1 (298 aa).

The span at 1–10 (MSSHIAKSES) shows a compositional bias: basic and acidic residues. Positions 1-131 (MSSHIAKSES…APAGTPEADP (131 aa)) are disordered. The N-myristoyl glycine moiety is linked to residue S2. The S-palmitoyl cysteine moiety is linked to residue H4. Residues 11–25 (KTSLLKAAAASGGSR) show a composition bias toward low complexity. 4 EF-hand domains span residues 153-188 (EEIEELREAFREFDKDKDGYINCRDLGNCMRTMGYM), 207-224 (GHVDFDDFVELMGPKLLA), 230-265 (IGVKELRDAFREFDTNGDGEISTSELREAMRKLLGH), and 267-298 (VGHRDIEEIIRDVDLNGDGRVDFEEFVRMMSR). Residues D166, D168, D170, Y172, and D177 each contribute to the Ca(2+) site. Residues D243, N245, D247, and E249 each contribute to the Ca(2+) site. At S251 the chain carries Phosphoserine. Ca(2+) is bound by residues E254, D280, N282, D284, R286, and E291.

Interacts with ITPR1, ITPR2 and ITPR3. The strength of this interaction inversely correlates with calcium concentration. Interacts with CACNA1A (via C-terminal CDB motif) in the pre- and postsynaptic membranes. Interacts with CACNA1C. Interacts with CACNA1D. Interacts (via EF-hands 1 and 2) at microtubules with MAP1LC3B. Interacts (via EF-hands 1 and 2) with NSMF (via the central NLS-containing motif region), the interaction occurs in a calcium dependent manner after synaptic NMDA receptor stimulation and prevents nuclear import of NSMF. Interacts with MYO1C and TRPC5. Interacts with SPACA9. Phosphorylated. The phosphorylation regulates the activity. Somatodendritic compartment of neurons. Restricted expression in retina to a subpopulation of amacrine, bipolar, and ganglion cells. According to PubMed:11906216, expression is heterogeneous within brain regions and their major cell types and does not match with those of marker proteins for characterized neuronal subpopulations. Isoform 2: Minor isoform expressed in the brain, in the granule cell layer of the cerebellum, at low level. Not developmentally regulated. Isoform 3: Minor isoform expressed in the brain, in the granule cell layer. of the cerebellum, at low level. Not developmentally regulated.

It is found in the cytoplasm. It localises to the cytoskeleton. Functionally, modulates calcium-dependent activity of inositol 1,4,5-triphosphate receptors (ITPRs). Inhibits agonist-induced intracellular calcium signaling. Enhances inactivation and does not support calcium-dependent facilitation of voltage-dependent P/Q-type calcium channels. Causes calcium-dependent facilitation and inhibits inactivation of L-type calcium channels by binding to the same sites as calmodulin in the C-terminal domain of CACNA1C, but has an opposite effect on channel function. Suppresses the calcium-dependent inactivation of CACNA1D. Inhibits TRPC5 channels. Prevents NMDA receptor-induced cellular degeneration. Required for the normal transfer of light signals through the retina. This is Calcium-binding protein 1 (Cabp1) from Rattus norvegicus (Rat).